Consider the following 78-residue polypeptide: Small ribosomal subunit protein bS20 (78 aa).

A disordered region spans residues 1–34 (MANIKSNLKRNKQNRARHTVVHSQTSAVKTQIKK). Over residues 7–20 (NLKRNKQNRARHTV) the composition is skewed to basic residues. Residues 21–34 (VHSQTSAVKTQIKK) show a composition bias toward polar residues.

The protein belongs to the bacterial ribosomal protein bS20 family.

In terms of biological role, binds directly to 16S ribosomal RNA. This is Small ribosomal subunit protein bS20 from Malacoplasma penetrans (strain HF-2) (Mycoplasma penetrans).